The primary structure comprises 123 residues: Large ribosomal subunit protein bL17 (123 aa).

This sequence belongs to the bacterial ribosomal protein bL17 family. As to quaternary structure, part of the 50S ribosomal subunit. Contacts protein L32.

The polypeptide is Large ribosomal subunit protein bL17 (Borreliella burgdorferi (strain ATCC 35210 / DSM 4680 / CIP 102532 / B31) (Borrelia burgdorferi)).